We begin with the raw amino-acid sequence, 56 residues long: Alpha-conotoxin EpI (56 aa).

The first 16 residues, Met1–Ser16, serve as a signal peptide directing secretion. A propeptide spanning residues Phe17–Lys39 is cleaved from the precursor. 2 disulfides stabilise this stretch: Cys41–Cys47 and Cys42–Cys55. The segment at Ser43–Pro45 is ser-Xaa-Pro motif, crucial for potent interaction with nAChR. Sulfotyrosine is present on Tyr54. At Cys55 the chain carries Cysteine amide.

Belongs to the conotoxin A superfamily. Both tyrosine sulfation and C-terminal amidation are important for activity and structure stability. In terms of tissue distribution, expressed by the venom duct.

The protein resides in the secreted. Alpha-conotoxins act on postsynaptic membranes, they bind to the nicotinic acetylcholine receptors (nAChR) and thus inhibit them. This native peptide blocks mammalian nicotinic acetylcholine receptors composed of alpha-3-beta-2/CHRNA3-CHRNB2 and alpha-3-beta-4/CHRNA3-CHRNB4 subunits. In Conus episcopatus (Bishop's cone), this protein is Alpha-conotoxin EpI.